The chain runs to 47 residues: Large ribosomal subunit protein bL33C (47 aa).

It belongs to the bacterial ribosomal protein bL33 family.

The chain is Large ribosomal subunit protein bL33C from Staphylococcus epidermidis (strain ATCC 35984 / DSM 28319 / BCRC 17069 / CCUG 31568 / BM 3577 / RP62A).